The primary structure comprises 534 residues: Cytokinin dehydrogenase 5 (534 aa).

Residues 1 to 20 form the signal peptide; that stretch reads MAWCLVFMVFLIYCLISTVG. In terms of domain architecture, FAD-binding PCMH-type spans 59–243; the sequence is TSAEPLAVFH…TRARIALEPA (185 aa). FAD is bound by residues Ala-93, Gly-95, and Gly-97. Pros-8alpha-FAD histidine is present on His-98. The FAD site is built by Ser-99 and Gln-103. Residue Asn-152 is glycosylated (N-linked (GlcNAc...) asparagine). Residues Asp-167, Ser-172, Ser-178, Ile-182, and Ile-233 each contribute to the FAD site. The N-linked (GlcNAc...) asparagine glycan is linked to Asn-256. Tyr-484 and Gln-522 together coordinate FAD.

It belongs to the oxygen-dependent FAD-linked oxidoreductase family. In terms of assembly, monomer. FAD is required as a cofactor. Expressed in inflorescence meristems.

It is found in the secreted. Its subcellular location is the extracellular space. The catalysed reaction is N(6)-dimethylallyladenine + A + H2O = 3-methyl-2-butenal + adenine + AH2. Catalyzes the oxidation of cytokinins, a family of N(6)-substituted adenine derivatives that are plant hormones, where the substituent is an isopentenyl group. The sequence is that of Cytokinin dehydrogenase 5 (CKX5) from Oryza sativa subsp. japonica (Rice).